The sequence spans 696 residues: DNA-directed RNA polymerase subunit beta' (696 aa).

The Zn(2+) site is built by C69, C71, C87, and C90. Mg(2+) contacts are provided by D504, D506, and D508.

The protein belongs to the RNA polymerase beta' chain family. RpoC1 subfamily. In plastids the minimal PEP RNA polymerase catalytic core is composed of four subunits: alpha, beta, beta', and beta''. When a (nuclear-encoded) sigma factor is associated with the core the holoenzyme is formed, which can initiate transcription. Mg(2+) is required as a cofactor. The cofactor is Zn(2+).

It is found in the plastid. The protein localises to the chloroplast. It catalyses the reaction RNA(n) + a ribonucleoside 5'-triphosphate = RNA(n+1) + diphosphate. DNA-dependent RNA polymerase catalyzes the transcription of DNA into RNA using the four ribonucleoside triphosphates as substrates. The polypeptide is DNA-directed RNA polymerase subunit beta' (Pinus thunbergii (Japanese black pine)).